The chain runs to 384 residues: S-adenosylmethionine synthase (384 aa).

H15 contacts ATP. Position 17 (D17) interacts with Mg(2+). E43 is a binding site for K(+). L-methionine is bound by residues E56 and Q99. The tract at residues 99 to 109 is flexible loop; it reads QSADINQGVDR. Residues 164–166, 230–231, D239, 245–246, A262, and K266 each bind ATP; these read DAK, RF, and RK. Position 239 (D239) interacts with L-methionine. K270 is a binding site for L-methionine.

It belongs to the AdoMet synthase family. Homotetramer; dimer of dimers. Mg(2+) is required as a cofactor. K(+) serves as cofactor.

The protein resides in the cytoplasm. The enzyme catalyses L-methionine + ATP + H2O = S-adenosyl-L-methionine + phosphate + diphosphate. It functions in the pathway amino-acid biosynthesis; S-adenosyl-L-methionine biosynthesis; S-adenosyl-L-methionine from L-methionine: step 1/1. Catalyzes the formation of S-adenosylmethionine (AdoMet) from methionine and ATP. The overall synthetic reaction is composed of two sequential steps, AdoMet formation and the subsequent tripolyphosphate hydrolysis which occurs prior to release of AdoMet from the enzyme. The chain is S-adenosylmethionine synthase from Haemophilus influenzae (strain 86-028NP).